We begin with the raw amino-acid sequence, 80 residues long: Cytochrome c oxidase subunit 7B, mitochondrial (80 aa).

Residues 1-24 (MLPLAKNALSRLQVRSIQQVVARQ) constitute a mitochondrion transit peptide. Over 25-39 (SHQKRAPSFHDKYGN) the chain is Mitochondrial matrix. Residues 40–60 (AILAGGAIFCVSTWTYTATQI) form a helical membrane-spanning segment. Over 61-80 (GIEWNMSPVGRVTPKEWRDQ) the chain is Mitochondrial intermembrane.

The protein belongs to the cytochrome c oxidase VIIb family. In terms of assembly, component of the cytochrome c oxidase (complex IV, CIV), a multisubunit enzyme composed of 14 subunits. The complex is composed of a catalytic core of 3 subunits MT-CO1, MT-CO2 and MT-CO3, encoded in the mitochondrial DNA, and 11 supernumerary subunits COX4I, COX5A, COX5B, COX6A, COX6B, COX6C, COX7A, COX7B, COX7C, COX8 and NDUFA4, which are encoded in the nuclear genome. The complex exists as a monomer or a dimer and forms supercomplexes (SCs) in the inner mitochondrial membrane with NADH-ubiquinone oxidoreductase (complex I, CI) and ubiquinol-cytochrome c oxidoreductase (cytochrome b-c1 complex, complex III, CIII), resulting in different assemblies (supercomplex SCI(1)III(2)IV(1) and megacomplex MCI(2)III(2)IV(2)).

It localises to the mitochondrion inner membrane. Its pathway is energy metabolism; oxidative phosphorylation. Component of the cytochrome c oxidase, the last enzyme in the mitochondrial electron transport chain which drives oxidative phosphorylation. The respiratory chain contains 3 multisubunit complexes succinate dehydrogenase (complex II, CII), ubiquinol-cytochrome c oxidoreductase (cytochrome b-c1 complex, complex III, CIII) and cytochrome c oxidase (complex IV, CIV), that cooperate to transfer electrons derived from NADH and succinate to molecular oxygen, creating an electrochemical gradient over the inner membrane that drives transmembrane transport and the ATP synthase. Cytochrome c oxidase is the component of the respiratory chain that catalyzes the reduction of oxygen to water. Electrons originating from reduced cytochrome c in the intermembrane space (IMS) are transferred via the dinuclear copper A center (CU(A)) of subunit 2 and heme A of subunit 1 to the active site in subunit 1, a binuclear center (BNC) formed by heme A3 and copper B (CU(B)). The BNC reduces molecular oxygen to 2 water molecules using 4 electrons from cytochrome c in the IMS and 4 protons from the mitochondrial matrix. Plays a role in proper central nervous system (CNS) development in vertebrates. This Mus musculus (Mouse) protein is Cytochrome c oxidase subunit 7B, mitochondrial (Cox7b).